Reading from the N-terminus, the 131-residue chain is D-ribose pyranase (131 aa).

The active-site Proton donor is His20. Residues Asp28, His98, and 120–122 (YAN) each bind substrate.

It belongs to the RbsD / FucU family. RbsD subfamily. In terms of assembly, homodecamer.

It is found in the cytoplasm. It catalyses the reaction beta-D-ribopyranose = beta-D-ribofuranose. It functions in the pathway carbohydrate metabolism; D-ribose degradation; D-ribose 5-phosphate from beta-D-ribopyranose: step 1/2. Catalyzes the interconversion of beta-pyran and beta-furan forms of D-ribose. This chain is D-ribose pyranase, found in Symbiobacterium thermophilum (strain DSM 24528 / JCM 14929 / IAM 14863 / T).